The primary structure comprises 394 residues: NAD(P)H-quinone oxidoreductase subunit H (394 aa).

The protein belongs to the complex I 49 kDa subunit family. NDH-1 can be composed of about 15 different subunits; different subcomplexes with different compositions have been identified which probably have different functions.

It localises to the cellular thylakoid membrane. It carries out the reaction a plastoquinone + NADH + (n+1) H(+)(in) = a plastoquinol + NAD(+) + n H(+)(out). The catalysed reaction is a plastoquinone + NADPH + (n+1) H(+)(in) = a plastoquinol + NADP(+) + n H(+)(out). In terms of biological role, NDH-1 shuttles electrons from an unknown electron donor, via FMN and iron-sulfur (Fe-S) centers, to quinones in the respiratory and/or the photosynthetic chain. The immediate electron acceptor for the enzyme in this species is believed to be plastoquinone. Couples the redox reaction to proton translocation, and thus conserves the redox energy in a proton gradient. Cyanobacterial NDH-1 also plays a role in inorganic carbon-concentration. The sequence is that of NAD(P)H-quinone oxidoreductase subunit H from Prochlorococcus marinus (strain MIT 9313).